The sequence spans 361 residues: Phenylalanine--tRNA ligase alpha subunit (361 aa).

E260 is a Mg(2+) binding site.

This sequence belongs to the class-II aminoacyl-tRNA synthetase family. Phe-tRNA synthetase alpha subunit type 1 subfamily. In terms of assembly, tetramer of two alpha and two beta subunits. The cofactor is Mg(2+).

It localises to the cytoplasm. It carries out the reaction tRNA(Phe) + L-phenylalanine + ATP = L-phenylalanyl-tRNA(Phe) + AMP + diphosphate + H(+). This Bartonella henselae (strain ATCC 49882 / DSM 28221 / CCUG 30454 / Houston 1) (Rochalimaea henselae) protein is Phenylalanine--tRNA ligase alpha subunit.